The chain runs to 426 residues: D-tagatose-1,6-bisphosphate aldolase subunit KbaZ (426 aa).

It belongs to the GatZ/KbaZ family. KbaZ subfamily. In terms of assembly, forms a complex with KbaY.

It functions in the pathway carbohydrate metabolism; D-tagatose 6-phosphate degradation; D-glyceraldehyde 3-phosphate and glycerone phosphate from D-tagatose 6-phosphate: step 2/2. Its function is as follows. Component of the tagatose-1,6-bisphosphate aldolase KbaYZ that is required for full activity and stability of the Y subunit. Could have a chaperone-like function for the proper and stable folding of KbaY. When expressed alone, KbaZ does not show any aldolase activity. This Escherichia coli O6:K15:H31 (strain 536 / UPEC) protein is D-tagatose-1,6-bisphosphate aldolase subunit KbaZ.